Here is a 520-residue protein sequence, read N- to C-terminus: AarF domain-containing protein kinase 1 (520 aa).

A Protein kinase domain is found at 148 to 455 (EFEKTPLGAA…GTHSSSSAFF (308 aa)). Residues 154–162 (LGAASLAQV) and lysine 176 contribute to the ATP site. Aspartate 308 (proton acceptor) is an active-site residue.

The protein belongs to the protein kinase superfamily. ADCK protein kinase family.

It is found in the mitochondrion. Appears to be essential for maintaining mitochondrial cristae formation and mitochondrial function by acting via YME1L1 in a kinase-independent manner to regulate essential mitochondrial structural proteins OPA1 and IMMT. The action of this enzyme is not yet clear. It is not known if it has protein kinase activity and what type of substrate it would phosphorylate (Ser, Thr or Tyr). This is AarF domain-containing protein kinase 1 (adck1) from Xenopus laevis (African clawed frog).